The primary structure comprises 610 residues: MPPVSASKAKRDAKKAEREAKKAAAGKTIRKLGRKKEAAAEESEVDAAAREIKMMKLQQDKDGLSDRVVTGVLSSLETSRDIKLSSVSLLFHGKVLIQDSGLELNYGRRYGLLGENGCGKSTFLKALATREYPIPEHIDIYLLDEPAEPSELSALDYVVTEAQHELKRIEDLVEKTILEDGPESELLEPLYERMDSLDPDTFESRAAIILIGLGFNKKTILKKTKDMSGGWKMRVALAKALFVKPTLLLLDDPTAHLDLEACVWLEEYLKRFDRTLVLVSHSQDFLNGVCTNMIDMRAQKLTAYGGNYDSYHKTRSELETNQMKQYNKQQEEIQHIKKFIASAGTYANLVKQAKSRQKILDKMEADGLVQPVVPDKVFSFRFPQVERLPPPVLAFDDISFHYESNPSENLYEHLNFGVDMDSRIALVGPNGVGKSTLLKIMTGELTPQSGRVSRHTHVKLGVYSQHSQDQLDLTKSALEFVRDKYSNISQDFQFWRGQLGRYGLTGEGQTVQMATLSEGQRSRVVFALLALEQPNVLLLDEPTNGLDIPTIDSLADAINEFNGGVVVVSHDFRLLDKIAQDIFVVENKTATRWDGSILQYKNKLAKNVVL.

A disordered region spans residues M1 to S43. Residues S43 and S65 each carry the phosphoserine modification. ABC transporter domains are found at residues I82–M323 and L393–L610. G114 to S121 contacts ATP. Residue S196 is modified to Phosphoserine. G428 to S435 provides a ligand contact to ATP. T446 is modified (phosphothreonine).

Belongs to the ABC transporter superfamily. ABCF family. EF3 subfamily. Interacts with LSG1.

Its subcellular location is the cytoplasm. It is found in the nucleus. It catalyses the reaction ATP + H2O = ADP + phosphate + H(+). In terms of biological role, ATPase that stimulates 40S and 60S ribosome biogenesis. Also involved in ribosome-associated quality control (RQC) pathway, a pathway that mediates ubiquitination and extraction of incompletely synthesized nascent chains for proteasomal degradation: localizes to the ribosomal E-site and stimulates VMS1-dependent tRNA cleavage. This is ABC transporter ATP-binding protein ARB1 (ARB1) from Saccharomyces cerevisiae (strain ATCC 204508 / S288c) (Baker's yeast).